Reading from the N-terminus, the 134-residue chain is Profilin-4 (134 aa).

The cysteines at positions 13 and 118 are disulfide-linked. Residues 84–100 (AVIRGKKGSGGITIKKT) carry the Involved in PIP2 interaction motif. Residue threonine 114 is modified to Phosphothreonine.

The protein belongs to the profilin family. Occurs in many kinds of cells as a complex with monomeric actin in a 1:1 ratio. In terms of processing, phosphorylated by MAP kinases.

It localises to the cytoplasm. The protein resides in the cytoskeleton. Functionally, binds to actin and affects the structure of the cytoskeleton. At high concentrations, profilin prevents the polymerization of actin, whereas it enhances it at low concentrations. The sequence is that of Profilin-4 from Olea europaea (Common olive).